Consider the following 132-residue polypeptide: Small ribosomal subunit protein uS8 (132 aa).

Belongs to the universal ribosomal protein uS8 family. In terms of assembly, part of the 30S ribosomal subunit. Contacts proteins S5 and S12.

Its function is as follows. One of the primary rRNA binding proteins, it binds directly to 16S rRNA central domain where it helps coordinate assembly of the platform of the 30S subunit. This chain is Small ribosomal subunit protein uS8, found in Clostridium kluyveri (strain NBRC 12016).